The chain runs to 398 residues: Chorismate synthase (398 aa).

NADP(+) contacts are provided by R44 and R50. FMN contacts are provided by residues 133 to 135 (RAS), 261 to 262 (QA), G306, 321 to 325 (KPIPT), and R347.

This sequence belongs to the chorismate synthase family. Homotetramer. The cofactor is FMNH2.

It carries out the reaction 5-O-(1-carboxyvinyl)-3-phosphoshikimate = chorismate + phosphate. It participates in metabolic intermediate biosynthesis; chorismate biosynthesis; chorismate from D-erythrose 4-phosphate and phosphoenolpyruvate: step 7/7. Catalyzes the anti-1,4-elimination of the C-3 phosphate and the C-6 proR hydrogen from 5-enolpyruvylshikimate-3-phosphate (EPSP) to yield chorismate, which is the branch point compound that serves as the starting substrate for the three terminal pathways of aromatic amino acid biosynthesis. This reaction introduces a second double bond into the aromatic ring system. This is Chorismate synthase from Aquifex aeolicus (strain VF5).